The sequence spans 844 residues: DNA mismatch repair protein MutS (844 aa).

An ATP-binding site is contributed by 602 to 609; that stretch reads GPNMSGKS.

Belongs to the DNA mismatch repair MutS family.

This protein is involved in the repair of mismatches in DNA. It is possible that it carries out the mismatch recognition step. This protein has a weak ATPase activity. The protein is DNA mismatch repair protein MutS of Streptococcus pneumoniae (strain Hungary19A-6).